A 286-amino-acid chain; its full sequence is Polyamine aminopropyltransferase (286 aa).

One can recognise a PABS domain in the interval 5 to 238; the sequence is TMWHETLHDQ…GIMTFAWATD (234 aa). Position 33 (Gln33) interacts with S-methyl-5'-thioadenosine. Residues His64 and Asp88 each coordinate spermidine. Residues Glu108 and 140-141 each bind S-methyl-5'-thioadenosine; that span reads DG. The Proton acceptor role is filled by Asp158. A spermidine-binding site is contributed by 158–161; sequence DCTD. Pro165 contributes to the S-methyl-5'-thioadenosine binding site.

The protein belongs to the spermidine/spermine synthase family. As to quaternary structure, homodimer or homotetramer.

The protein localises to the cytoplasm. It carries out the reaction S-adenosyl 3-(methylsulfanyl)propylamine + putrescine = S-methyl-5'-thioadenosine + spermidine + H(+). Its pathway is amine and polyamine biosynthesis; spermidine biosynthesis; spermidine from putrescine: step 1/1. Its function is as follows. Catalyzes the irreversible transfer of a propylamine group from the amino donor S-adenosylmethioninamine (decarboxy-AdoMet) to putrescine (1,4-diaminobutane) to yield spermidine. The protein is Polyamine aminopropyltransferase of Salmonella enteritidis PT4 (strain P125109).